We begin with the raw amino-acid sequence, 490 residues long: Cobyric acid synthase (490 aa).

A GATase cobBQ-type domain is found at 252 to 439 (RLKVVVPVLP…LHGLFESTAA (188 aa)). Cysteine 333 functions as the Nucleophile in the catalytic mechanism. Residue histidine 431 is part of the active site.

It belongs to the CobB/CobQ family. CobQ subfamily.

It functions in the pathway cofactor biosynthesis; adenosylcobalamin biosynthesis. Catalyzes amidations at positions B, D, E, and G on adenosylcobyrinic A,C-diamide. NH(2) groups are provided by glutamine, and one molecule of ATP is hydrogenolyzed for each amidation. The sequence is that of Cobyric acid synthase from Pseudomonas aeruginosa (strain LESB58).